The following is a 293-amino-acid chain: 33 kDa chaperonin (293 aa).

Disulfide bonds link Cys229–Cys231 and Cys262–Cys265.

This sequence belongs to the HSP33 family. Post-translationally, under oxidizing conditions two disulfide bonds are formed involving the reactive cysteines. Under reducing conditions zinc is bound to the reactive cysteines and the protein is inactive.

It is found in the cytoplasm. Its function is as follows. Redox regulated molecular chaperone. Protects both thermally unfolding and oxidatively damaged proteins from irreversible aggregation. Plays an important role in the bacterial defense system toward oxidative stress. This chain is 33 kDa chaperonin, found in Methylobacillus flagellatus (strain ATCC 51484 / DSM 6875 / VKM B-1610 / KT).